The sequence spans 346 residues: Guanine nucleotide-binding protein subunit beta-2 (346 aa).

WD repeat units follow at residues 57–96, 99–138, 147–185, 188–227, 230–269, 274–313, and 316–346; these read GHIN…KVQI, LRSA…ASGV, GYEG…KTMD, GHAG…HKQM, GHDM…QIAQ, QKNT…HTGT, and GHEN…RLWL.

It belongs to the WD repeat G protein beta family. G proteins are composed of 3 units, alpha, beta and gamma. Interacts with Ggamma30A/Guanine nucleotide-binding protein subunit gamma-e. Expressed exclusively in photoreceptor cells in the compound eye (at protein level).

It localises to the cytoplasm. Its subcellular location is the cell projection. The protein resides in the axon. The protein localises to the rhabdomere. In terms of biological role, guanine nucleotide-binding proteins (G proteins) are involved as a modulator or transducer in various transmembrane signaling systems. The beta and gamma chains are required for the GTPase activity, for replacement of GDP by GTP, and for G protein-effector interaction. The sequence is that of Guanine nucleotide-binding protein subunit beta-2 (Gbeta76C) from Drosophila melanogaster (Fruit fly).